We begin with the raw amino-acid sequence, 130 residues long: Small ribosomal subunit protein uS8 (130 aa).

The protein belongs to the universal ribosomal protein uS8 family. Part of the 30S ribosomal subunit. Contacts proteins S5 and S12.

In terms of biological role, one of the primary rRNA binding proteins, it binds directly to 16S rRNA central domain where it helps coordinate assembly of the platform of the 30S subunit. In Photorhabdus laumondii subsp. laumondii (strain DSM 15139 / CIP 105565 / TT01) (Photorhabdus luminescens subsp. laumondii), this protein is Small ribosomal subunit protein uS8.